Consider the following 307-residue polypeptide: 4-hydroxythreonine-4-phosphate dehydrogenase (307 aa).

Positions 126 and 127 each coordinate substrate. A divalent metal cation contacts are provided by histidine 156, histidine 195, and histidine 251. 3 residues coordinate substrate: lysine 259, asparagine 268, and arginine 277.

This sequence belongs to the PdxA family. In terms of assembly, homodimer. Zn(2+) serves as cofactor. Mg(2+) is required as a cofactor. The cofactor is Co(2+).

Its subcellular location is the cytoplasm. The catalysed reaction is 4-(phosphooxy)-L-threonine + NAD(+) = 3-amino-2-oxopropyl phosphate + CO2 + NADH. It participates in cofactor biosynthesis; pyridoxine 5'-phosphate biosynthesis; pyridoxine 5'-phosphate from D-erythrose 4-phosphate: step 4/5. In terms of biological role, catalyzes the NAD(P)-dependent oxidation of 4-(phosphooxy)-L-threonine (HTP) into 2-amino-3-oxo-4-(phosphooxy)butyric acid which spontaneously decarboxylates to form 3-amino-2-oxopropyl phosphate (AHAP). In Helicobacter pylori (strain G27), this protein is 4-hydroxythreonine-4-phosphate dehydrogenase.